The primary structure comprises 257 residues: MGQKVNPIGFRVGVIRDWDSKWYADKKIVPALVKEDAVIRKFLNKKYNNAAVSHVEIERLKELKVKKRVKITLHSGKPGVVIGREAATMKETIASLEKLTKKEIVFNVVEVRKPEVVATLVAQSMAEQLENRASFRKSTKNCYAKSIKVRAKGIKTLSQRLGGREMARTEGYSEGQVPLHTLRADVEYATAEAQTTYGILGIKVWIYHGEILPGQSHEELRKERQSSASSNHGGGKRRPSRKGPRRSQEDAATEGGN.

The KH type-2 domain maps to 39–112 (IRKFLNKKYN…EIVFNVVEVR (74 aa)). A disordered region spans residues 217-257 (HEELRKERQSSASSNHGGGKRRPSRKGPRRSQEDAATEGGN). A compositionally biased stretch (basic residues) spans 234–245 (GGKRRPSRKGPR).

It belongs to the universal ribosomal protein uS3 family. As to quaternary structure, part of the 30S ribosomal subunit. Forms a tight complex with proteins S10 and S14.

Binds the lower part of the 30S subunit head. Binds mRNA in the 70S ribosome, positioning it for translation. This is Small ribosomal subunit protein uS3 from Haploplasma axanthum (Acholeplasma axanthum).